The following is a 92-amino-acid chain: N(2)-fixation sustaining protein CowN (92 aa).

Belongs to the CowN family.

Its function is as follows. Is required to sustain N(2)-dependent growth in the presence of low levels of carbon monoxide (CO). Probably acts by protecting the N(2) fixation ability of the nitrogenase complex, which is inactivated in the presence of CO. The sequence is that of N(2)-fixation sustaining protein CowN from Cereibacter sphaeroides (strain ATCC 17025 / ATH 2.4.3) (Rhodobacter sphaeroides).